Reading from the N-terminus, the 894-residue chain is Mitogen-activated protein kinase kinase kinase kinase 3 (894 aa).

Methionine 1 is modified (N-acetylmethionine). Residues 16 to 273 (FELIQRIGSG…AEKLLQHPFV (258 aa)) form the Protein kinase domain. Residues 22 to 30 (IGSGTYGDV) and lysine 45 each bind ATP. The active-site Proton acceptor is aspartate 136. Serine 329 carries the post-translational modification Phosphoserine. Residues 339–358 (DPPLRKETEPHHELPDSDGF) form a disordered region. Over residues 340 to 353 (PPLRKETEPHHELP) the composition is skewed to basic and acidic residues. Serine 398 is modified (phosphoserine). Residues 408-537 (HVAHLEDDEG…VPKPISNGLP (130 aa)) are disordered. Residues 473–487 (HVPPRPPPPRLPPQK) show a composition bias toward pro residues. Residues 508–520 (LYQQQSEQRGTNL) show a composition bias toward polar residues. In terms of domain architecture, CNH spans 556–867 (PLKIHCATSW…IFRLLGSDRV (312 aa)).

The protein belongs to the protein kinase superfamily. STE Ser/Thr protein kinase family. STE20 subfamily. As to quaternary structure, interacts with SH3GL2. Interaction appears to regulate MAP4K3-mediated JNK activation. Requires Mg(2+) as cofactor.

The enzyme catalyses L-seryl-[protein] + ATP = O-phospho-L-seryl-[protein] + ADP + H(+). It carries out the reaction L-threonyl-[protein] + ATP = O-phospho-L-threonyl-[protein] + ADP + H(+). Functionally, serine/threonine kinase that plays a role in the response to environmental stress. Appears to act upstream of the JUN N-terminal pathway. Activator of the Hippo signaling pathway which plays a pivotal role in organ size control and tumor suppression by restricting proliferation and promoting apoptosis. MAP4Ks act in parallel to and are partially redundant with STK3/MST2 and STK4/MST2 in the phosphorylation and activation of LATS1/2, and establish MAP4Ks as components of the expanded Hippo pathway. This chain is Mitogen-activated protein kinase kinase kinase kinase 3 (Map4k3), found in Mus musculus (Mouse).